Consider the following 510-residue polypeptide: Light-independent protochlorophyllide reductase subunit B (510 aa).

D36 contacts [4Fe-4S] cluster. Residue D296 is the Proton donor of the active site. Residue 431–432 (GM) coordinates substrate.

It belongs to the ChlB/BchB/BchZ family. Protochlorophyllide reductase is composed of three subunits; ChlL, ChlN and ChlB. Forms a heterotetramer of two ChlB and two ChlN subunits. It depends on [4Fe-4S] cluster as a cofactor.

The protein localises to the plastid. Its subcellular location is the chloroplast. It carries out the reaction chlorophyllide a + oxidized 2[4Fe-4S]-[ferredoxin] + 2 ADP + 2 phosphate = protochlorophyllide a + reduced 2[4Fe-4S]-[ferredoxin] + 2 ATP + 2 H2O. It functions in the pathway porphyrin-containing compound metabolism; chlorophyll biosynthesis (light-independent). In terms of biological role, component of the dark-operative protochlorophyllide reductase (DPOR) that uses Mg-ATP and reduced ferredoxin to reduce ring D of protochlorophyllide (Pchlide) to form chlorophyllide a (Chlide). This reaction is light-independent. The NB-protein (ChlN-ChlB) is the catalytic component of the complex. The chain is Light-independent protochlorophyllide reductase subunit B from Auxenochlorella protothecoides (Green microalga).